A 721-amino-acid chain; its full sequence is Oviduct-specific glycoprotein (721 aa).

The first 21 residues, 1 to 21 (MGRLLLLAGLVLLMKHSDGTA), serve as a signal peptide directing secretion. The GH18 domain occupies 22-385 (YKLVCYFTNW…HILNELLVQT (364 aa)). A disulfide bridge links cysteine 26 with cysteine 51. Residues 71 to 72 (LQ), 98 to 101 (GGWN), tyrosine 142, 211 to 214 (LSYD), and tryptophan 355 contribute to the chitin site. Asparagine 402 and asparagine 442 each carry an N-linked (GlcNAc...) asparagine glycan. Residues 444 to 456 (TTVPSDGSVTPGG) are compositionally biased toward polar residues. The disordered stretch occupies residues 444 to 465 (TTVPSDGSVTPGGTASPRKHAV). The N-linked (GlcNAc...) asparagine glycan is linked to asparagine 469. A run of 21 repeats spans residues 486–492 (SKTTTGV), 493–499 (SKTTTGI), 500–506 (SKTTTGV), 507–513 (SKTTTGV), 514–520 (SKATAGI), 521–527 (SKTIPEI), 528–534 (SKATAGV), 535–541 (SKTTTGV), 542–548 (SKTTTGI), 549–555 (SKTITGV), 556–562 (SKTTTGI), 563–569 (SKTTTGI), 570–576 (SKTTTGV), 577–583 (SKITTGV), 584–590 (SKTTTGI), 591–597 (SKTTTGI), 598–604 (SQTTTGI), 605–611 (SKTTTDI), 612–618 (SKTTTGI), 619–625 (SKTTPGI), and 626–632 (SKTTPGM). The interval 486-632 (SKTTTGVSKT…PGISKTTPGM (147 aa)) is 21 X 7 AA tandem repeats of S-K-[TAI]-[TI]-[TAP]-[GED]-[IVM].

It belongs to the glycosyl hydrolase 18 family. As to expression, epithelial cells of the oviduct.

It localises to the cytoplasmic vesicle. Its subcellular location is the secretory vesicle. In terms of biological role, binds to oocyte zona pellucida in vivo. May play a role in the fertilization process and/or early embryonic development. The sequence is that of Oviduct-specific glycoprotein (Ovgp1) from Mus musculus (Mouse).